A 167-amino-acid polypeptide reads, in one-letter code: Protein FAM163B (167 aa).

Residues 6–26 (VVITGGILATVILLCIIAVLC) form a helical membrane-spanning segment. At S40 the chain carries Phosphoserine.

Belongs to the FAM163 family.

The protein localises to the membrane. The polypeptide is Protein FAM163B (Fam163b) (Mus musculus (Mouse)).